Reading from the N-terminus, the 201-residue chain is Coat protein (201 aa).

It belongs to the potexvirus capsid protein family.

The protein resides in the virion. Functionally, required for genome encapsidation. Forms ribonucleoprotein complexes along with TGB1 helicase and viral RNA. The chain is Coat protein from Lilium formosanum.